The following is a 312-amino-acid chain: Protoheme IX farnesyltransferase (312 aa).

Helical transmembrane passes span 33-53 (VMLLVVFTALVGLIVSPVSIN), 54-74 (PLYGFLAILCIAVGGGGAGAL), 105-125 (FIFGMVLSILSVLIMGSFVNW), 126-146 (FAALFLAFTIFFYIVVYTIWL), 154-174 (IVIGGAAGAFPPMIGWAAATG), 181-201 (FLLFLIIFMWTPPHFWSLSLF), 243-263 (IIGFAGVFYGIFSTVLSIIFI), and 291-311 (FYLAAIFGILLIEFFVWCFII).

It belongs to the UbiA prenyltransferase family. Protoheme IX farnesyltransferase subfamily.

The protein localises to the cell inner membrane. The catalysed reaction is heme b + (2E,6E)-farnesyl diphosphate + H2O = Fe(II)-heme o + diphosphate. It functions in the pathway porphyrin-containing compound metabolism; heme O biosynthesis; heme O from protoheme: step 1/1. In terms of biological role, converts heme B (protoheme IX) to heme O by substitution of the vinyl group on carbon 2 of heme B porphyrin ring with a hydroxyethyl farnesyl side group. The sequence is that of Protoheme IX farnesyltransferase from Bartonella henselae (strain ATCC 49882 / DSM 28221 / CCUG 30454 / Houston 1) (Rochalimaea henselae).